The following is a 449-amino-acid chain: MSQHTFVAGTAPGAVPVVGHAWQMMRRPLHFMSSLSAHGDLVKIRIGPTSAYVPCHPELLRQVLTNDRVFDKGGVFYDRARDIAGNGLVTCPYRDHRRQRRLMQSAFQRTQLERYSTAMRAEIDATAARWHDGTVIDAFPELYGMALRTVARTLYSTPVTEELAQRVEQAFDTVLNGLFRQMFLPHSLRRLPTPANLRYRNNLRFLHDTVQDLITEYRRDDTQRDDLLSALLASRDEDGGRLGDTEIHDQVITVMAAGTETVAGTLTWIFHLLSRHPEIEARLYEEIDTVLDGKPPHWDDLPSLSLTDRIITEALRMYPPAWIFTRLTASDVDLAGVRLPEGTTIVFSPSSVQRHSEAYDDASRFDPDRWLPDRTSAVARQAFTAFGTGARKCIGDLFARTEATLALATMLSQWRVTVEPDADVRPVALATVYHPRRLRLRLTARTPGQ.

The chain crosses the membrane as a helical span at residues 251-273 (VITVMAAGTETVAGTLTWIFHLL). Residue Cys393 participates in heme binding.

It belongs to the cytochrome P450 family.

It is found in the membrane. The catalysed reaction is pentalenene + 4 reduced [2Fe-2S]-[ferredoxin] + 2 O2 + 4 H(+) = pentalen-13-al + 4 oxidized [2Fe-2S]-[ferredoxin] + 3 H2O. It participates in antibiotic biosynthesis; neopentalenolactone biosynthesis. In terms of biological role, catalyzes the conversion of pentalenene to pentalen-13-al by stepwise oxidation via pentalen-13-ol, a precursor of neopentalenolactone antibiotic. The sequence is that of Pentalenene oxygenase (ptlI) from Streptomyces avermitilis (strain ATCC 31267 / DSM 46492 / JCM 5070 / NBRC 14893 / NCIMB 12804 / NRRL 8165 / MA-4680).